The chain runs to 161 residues: RNA pyrophosphohydrolase (161 aa).

The Nudix hydrolase domain occupies 12-154 (PYRPGVGMMI…KRKLYQAVVK (143 aa)). The Nudix box motif lies at 46 to 67 (GGIVPGETPSIAAMREMLEEIG).

This sequence belongs to the Nudix hydrolase family. RppH subfamily. A divalent metal cation serves as cofactor.

In terms of biological role, accelerates the degradation of transcripts by removing pyrophosphate from the 5'-end of triphosphorylated RNA, leading to a more labile monophosphorylated state that can stimulate subsequent ribonuclease cleavage. This is RNA pyrophosphohydrolase from Rickettsia canadensis (strain McKiel).